Reading from the N-terminus, the 681-residue chain is Protein NirI (681 aa).

The signal sequence occupies residues 1 to 30 (MAMPGKSSHAPSRLLLALLTLILLALPARP). 5 helical membrane passes run 394 to 414 (IPGI…LFGQ), 436 to 456 (LVVL…VAFL), 468 to 488 (FLIE…LLFW), 535 to 555 (TLFV…LILA), and 568 to 588 (FLRA…GLFI).

The protein to P.stutzeri NosR.

It localises to the cell membrane. The polypeptide is Protein NirI (nirI) (Paracoccus denitrificans (strain Pd 1222)).